The chain runs to 355 residues: UDP-N-acetylglucosamine--N-acetylmuramyl-(pentapeptide) pyrophosphoryl-undecaprenol N-acetylglucosamine transferase (355 aa).

Residues 15–17 (TGG), Asn-127, Arg-163, Ser-191, Ile-244, 263–268 (ALTVSE), and Gln-288 contribute to the UDP-N-acetyl-alpha-D-glucosamine site.

This sequence belongs to the glycosyltransferase 28 family. MurG subfamily.

The protein localises to the cell inner membrane. The enzyme catalyses di-trans,octa-cis-undecaprenyl diphospho-N-acetyl-alpha-D-muramoyl-L-alanyl-D-glutamyl-meso-2,6-diaminopimeloyl-D-alanyl-D-alanine + UDP-N-acetyl-alpha-D-glucosamine = di-trans,octa-cis-undecaprenyl diphospho-[N-acetyl-alpha-D-glucosaminyl-(1-&gt;4)]-N-acetyl-alpha-D-muramoyl-L-alanyl-D-glutamyl-meso-2,6-diaminopimeloyl-D-alanyl-D-alanine + UDP + H(+). It functions in the pathway cell wall biogenesis; peptidoglycan biosynthesis. In terms of biological role, cell wall formation. Catalyzes the transfer of a GlcNAc subunit on undecaprenyl-pyrophosphoryl-MurNAc-pentapeptide (lipid intermediate I) to form undecaprenyl-pyrophosphoryl-MurNAc-(pentapeptide)GlcNAc (lipid intermediate II). The polypeptide is UDP-N-acetylglucosamine--N-acetylmuramyl-(pentapeptide) pyrophosphoryl-undecaprenol N-acetylglucosamine transferase (Salmonella paratyphi B (strain ATCC BAA-1250 / SPB7)).